Consider the following 542-residue polypeptide: Prolyl 3-hydroxylase OGFOD1 (542 aa).

The Fe2OG dioxygenase domain occupies 134–239 (DLESTIDMSC…RLSISGWFHG (106 aa)). Residues His-155 and Asp-157 each coordinate Fe cation. Residue Tyr-169 coordinates 2-oxoglutarate. His-218 is a Fe cation binding site. Arg-230 serves as a coordination point for 2-oxoglutarate. The segment at 371–435 (SEDEPEDKKE…AKKESSVPTC (65 aa)) is disordered. Residues 395 to 417 (SHSSSEPENSWAATSDSSLQSEG) show a composition bias toward polar residues.

Belongs to the TPA1 family. Monomer. Fe(2+) is required as a cofactor. Requires L-ascorbate as cofactor.

It is found in the cytoplasm. Its subcellular location is the nucleus. The enzyme catalyses [ribosomal protein uS12]-L-proline + 2-oxoglutarate + O2 = [ribosomal protein uS12]-(3S)-3-hydroxy-L-proline + succinate + CO2. In terms of biological role, prolyl 3-hydroxylase that catalyzes 3-hydroxylation of 'Pro-62' of small ribosomal subunit uS12 (RPS23), thereby regulating protein translation termination efficiency. Involved in stress granule formation. In Bos taurus (Bovine), this protein is Prolyl 3-hydroxylase OGFOD1 (OGFOD1).